A 513-amino-acid chain; its full sequence is MRLEVFCEDRLGLTRELLDLLVLRGIDLRGIEIDPIGRIYLNFAELEFESFSSLMAEIRRIAGVTDVRTVPWMPSEREHLALSALLEALPEPVLSVDMKSKVDMANPASCQLFGQKLDRLRNHTAAQLINGFNFLRWLESEPQDSHNEHVVINGQNFLMEITPVYLQDENDQHVLTGAVVMLRSTIRMGRQLQNVAAQDVSAFSQIVAVSPKMKHVVEQAQKLAMLSAPLLITGDTGTGKDLFAYACHQASPRAGKPYLALNCASIPEDAVESELFGHAPEGKKGFFEQANGGSVLLDEIGEMSPRMQAKLLRFLNDGTFRRVGEDHEVHVDVRVICATQKNLVELVQKGMFREDLYYRLNVLTLNLPPLRDCPQDIMPLTELFVARFADEQGVPRPKLAADLNTVLTRYAWPGNVRQLKNAIYRALTQLDGYELRPQDILLPDYDAATVAVGEDAMEGSLDEITSRFERSVLTQLYRNYPSTRKLAKRLGVSHTAIANKLREYGLSQKKNEE.

The region spanning 2 to 72 (RLEVFCEDRL…GVTDVRTVPW (71 aa)) is the ACT domain. One can recognise a PAS domain in the interval 78–114 (EHLALSALLEALPEPVLSVDMKSKVDMANPASCQLFG). A Sigma-54 factor interaction domain is found at 206-428 (IVAVSPKMKH…LKNAIYRALT (223 aa)). ATP is bound by residues 234–241 (GDTGTGKD) and 290–299 (ANGGSVLLDE). Residues 482-502 (STRKLAKRLGVSHTAIANKLR) constitute a DNA-binding region (H-T-H motif).

Homodimer. In presence of tyrosine (or high concentrations of phenylalanine or tryptophan) and ATP, it self-associates to form an hexamer. At low tyrosine concentrations, homodimers can bind to certain recognition sequences referred to as 'strong TyrR boxes'. Homohexamers are the active repressing species, interacting with two or three tyrR boxes in the targeted regulatory DNA, including 'strong TyrR boxes' and lower-affinity sites called 'weak TyrR boxes'.

It localises to the cytoplasm. With respect to regulation, binding of ATP strongly enhances the affinity of TyrR for tyrosine. Its function is as follows. Dual transcriptional regulator of the TyrR regulon, which includes a number of genes coding for proteins involved in the biosynthesis or transport of the three aromatic amino acids, phenylalanine, tyrosine and tryptophan. These three aromatic amino acids act as effectors which bind to the TyrR protein to form an active regulatory protein. Modulates the expression of at least eight unlinked transcription units, including aroF, aroG, aroLM, aroP, mtr, tyrA, tyrB and tyrP. In most cases TyrR acts as a repressor, but positive effects have been observed on the tyrP gene, which is repressed in the presence of tyrosine and activated at high phenylalanine concentrations. Is also involved in activation, but not repression, of mtr expression in association with phenylalanine or tyrosine. Acts by binding specifically to TyrR boxes in the promoter region of the target genes. This chain is HTH-type transcriptional regulatory protein TyrR, found in Escherichia coli (strain K12).